The chain runs to 425 residues: UPF0597 protein KPN78578_43500 (425 aa).

The protein belongs to the UPF0597 family.

The sequence is that of UPF0597 protein KPN78578_43500 from Klebsiella pneumoniae subsp. pneumoniae (strain ATCC 700721 / MGH 78578).